Consider the following 527-residue polypeptide: Homeobox protein NOBOX (527 aa).

Disordered stretches follow at residues 1–126, 194–245, 271–306, and 488–527; these read MEPT…DLKK, VEKL…DVFP, VTPP…RDVP, and ETGS…GAKE. The homeobox DNA-binding region spans 136-195; that stretch reads RKKTRTLYRSDQLEELERIFQEDHYPDSDKRHEISQMVGVTPQRIMVWFQNRRAKWRKVE. Basic and acidic residues predominate over residues 194-203; it reads VEKLNEKETK. Over residues 488–506 the composition is skewed to polar residues; the sequence is ETGSSLSKMSDEQTSSSLE. Positions 511–527 are enriched in basic and acidic residues; it reads EEVRDKNKNSHAAGAKE.

In terms of tissue distribution, specifically expressed in ovaries and testes. In ovaries, expressed in oocytes from primordial through antral follicles but not in granulosa cells, theca cells and corpora lutea.

Its subcellular location is the nucleus. Transcription factor which plays an essential role in postnatal follicle development. Binds preferentially to the DNA sequences 5'-TAATTG-3', 5'-TAGTTG-3' and 5'-TAATTA-3'. Directly regulates the transcription of POU5F1 and GDF9 during early folliculogenesis. In Mus musculus (Mouse), this protein is Homeobox protein NOBOX (Nobox).